The sequence spans 154 residues: Myoglobin (154 aa).

Residues Val2 to Lys148 form the Globin domain. Ser4 is subject to Phosphoserine. His65 contributes to the nitrite binding site. O2 is bound at residue His65. Thr68 is subject to Phosphothreonine. His94 provides a ligand contact to heme b.

This sequence belongs to the globin family. Monomeric.

It localises to the cytoplasm. The protein localises to the sarcoplasm. The enzyme catalyses Fe(III)-heme b-[protein] + nitric oxide + H2O = Fe(II)-heme b-[protein] + nitrite + 2 H(+). It carries out the reaction H2O2 + AH2 = A + 2 H2O. Functionally, monomeric heme protein which primary function is to store oxygen and facilitate its diffusion within muscle tissues. Reversibly binds oxygen through a pentacoordinated heme iron and enables its timely and efficient release as needed during periods of heightened demand. Depending on the oxidative conditions of tissues and cells, and in addition to its ability to bind oxygen, it also has a nitrite reductase activity whereby it regulates the production of bioactive nitric oxide. Under stress conditions, like hypoxia and anoxia, it also protects cells against reactive oxygen species thanks to its pseudoperoxidase activity. This Megaptera novaeangliae (Humpback whale) protein is Myoglobin (MB).